The chain runs to 150 residues: UPF0178 protein Maqu_2186 (150 aa).

Belongs to the UPF0178 family.

This is UPF0178 protein Maqu_2186 from Marinobacter nauticus (strain ATCC 700491 / DSM 11845 / VT8) (Marinobacter aquaeolei).